Reading from the N-terminus, the 309-residue chain is MKWLEIQVTTSQEAEEAVTGILYDLGAGGVVIKNPNDVKELAQTSEWDYFDPSLLEEGEEVKISAYFLITTDITDKVNFLKERIWELKSFGINVGNVKVEVSEVDEEDWADSWKKYYKPLKVGKRIVVRPLWEEYSPKEGEIVIDLDPGMAFGTGTHETTKMCLQFLEDIVKPGAIVFDVGCGSGILSIAASKLGASYVYGADVDEMAVKIARENVKLNGLENVEIFQSDLLKNFRGKADVIVANIIADAIIRLIPDVLPHLKEEGLFLASGIIKDRFEEVKERAEEFFEIIDMKEEKEWLSILMKKKG.

S-adenosyl-L-methionine contacts are provided by Thr-160, Gly-181, Asp-203, and Asn-245.

Belongs to the methyltransferase superfamily. PrmA family.

The protein localises to the cytoplasm. The catalysed reaction is L-lysyl-[protein] + 3 S-adenosyl-L-methionine = N(6),N(6),N(6)-trimethyl-L-lysyl-[protein] + 3 S-adenosyl-L-homocysteine + 3 H(+). Its function is as follows. Methylates ribosomal protein L11. The chain is Ribosomal protein L11 methyltransferase from Caldanaerobacter subterraneus subsp. tengcongensis (strain DSM 15242 / JCM 11007 / NBRC 100824 / MB4) (Thermoanaerobacter tengcongensis).